Consider the following 150-residue polypeptide: Large ribosomal subunit protein bL9 (150 aa).

This sequence belongs to the bacterial ribosomal protein bL9 family.

Functionally, binds to the 23S rRNA. The polypeptide is Large ribosomal subunit protein bL9 (Thioalkalivibrio sulfidiphilus (strain HL-EbGR7)).